Here is a 279-residue protein sequence, read N- to C-terminus: Rhamnulose-1-phosphate aldolase (279 aa).

Residue glutamate 115 is part of the active site. The Zn(2+) site is built by histidine 138, histidine 140, and histidine 209.

It belongs to the aldolase class II family. RhaD subfamily. Zn(2+) serves as cofactor.

The protein resides in the cytoplasm. It catalyses the reaction L-rhamnulose 1-phosphate = (S)-lactaldehyde + dihydroxyacetone phosphate. Its pathway is carbohydrate degradation; L-rhamnose degradation; glycerone phosphate from L-rhamnose: step 3/3. Its function is as follows. Catalyzes the reversible cleavage of L-rhamnulose-1-phosphate to dihydroxyacetone phosphate (DHAP) and L-lactaldehyde. The sequence is that of Rhamnulose-1-phosphate aldolase from Enterococcus faecalis (strain ATCC 700802 / V583).